A 51-amino-acid polypeptide reads, in one-letter code: MARYRCCRSKSRSRCRRRRRRCRRRRRRCCRRRRRRCCRRRRSYTFRCKRY.

2 disulfides stabilise this stretch: C7–C15 and C38–C48.

The protein belongs to the protamine P1 family. Cross-linked by interchain disulfide bonds around the DNA-helix. Post-translationally, phosphorylated by SRPK1. Testis.

The protein localises to the nucleus. It localises to the chromosome. Protamines substitute for histones in the chromatin of sperm during the haploid phase of spermatogenesis. They compact sperm DNA into a highly condensed, stable and inactive complex. The protein is Sperm protamine P1 (Prm1) of Rattus norvegicus (Rat).